The following is a 412-amino-acid chain: Divalent metal cation transporter MntH (412 aa).

The Cytoplasmic segment spans residues 1-19 (MTNYRVESSSGRAARKMRL). A helical membrane pass occupies residues 20–39 (ALMGPAFIAAIGYIDPGNFA). At 40-51 (TNIQAGASFGYQ) the chain is on the periplasmic side. The chain crosses the membrane as a helical span at residues 52–71 (LLWVVVWANLMAMLIQILSA). At 72 to 95 (KLGIATGKNLAEQIRDHYPRPVVW) the chain is on the cytoplasmic side. The helical transmembrane segment at 96 to 118 (FYWVQAEIIAMATDLAEFIGAAI) threads the bilayer. Topologically, residues 119–125 (GFKLILG) are periplasmic. The chain crosses the membrane as a helical span at residues 126-145 (VSLLQGAVLTGIATFLILML). Residues 146–155 (QRRGQKPLEK) lie on the Cytoplasmic side of the membrane. Residues 156–175 (VIGGLLLFVAAAYIVELIFS) traverse the membrane as a helical segment. At 176–196 (QPNLAQLGKGMVIPSLPTSEA) the chain is on the periplasmic side. The helical transmembrane segment at 197–220 (VFLAAGVLGATIMPHVIYLHSSLT) threads the bilayer. Over 221 to 238 (QHLHGGSRQQRYSATKWD) the chain is Cytoplasmic. A helical membrane pass occupies residues 239-258 (VAIAMTIAGFVNLAMMATAA). Over 259 to 276 (AAFHFSGHTGVADLDEAY) the chain is Periplasmic. A helical transmembrane segment spans residues 277–297 (LTLQPLLSHAAATVFGLSLVA). The Cytoplasmic portion of the chain corresponds to 298–327 (AGLSSTVVGTLAGQVVMQGFIRFHIPLWVR). Residues 328-344 (RTVTMLPSFIVILMGLD) traverse the membrane as a helical segment. The Periplasmic portion of the chain corresponds to 345–350 (PTRILV). A helical transmembrane segment spans residues 351-370 (MSQVLLSFGIALALVPLLIF). At 371–387 (TSDSKLMGDLVNSKRVK) the chain is on the cytoplasmic side. The helical transmembrane segment at 388–406 (QTGWVIVVLVVALNIWLLV) threads the bilayer. The Periplasmic portion of the chain corresponds to 407-412 (GTALGL).

This sequence belongs to the NRAMP family.

It is found in the cell inner membrane. Functionally, h(+)-stimulated, divalent metal cation uptake system. This Escherichia fergusonii (strain ATCC 35469 / DSM 13698 / CCUG 18766 / IAM 14443 / JCM 21226 / LMG 7866 / NBRC 102419 / NCTC 12128 / CDC 0568-73) protein is Divalent metal cation transporter MntH.